Consider the following 38-residue polypeptide: Large ribosomal subunit protein bL36 (38 aa).

This sequence belongs to the bacterial ribosomal protein bL36 family.

This chain is Large ribosomal subunit protein bL36, found in Proteus mirabilis (strain HI4320).